The following is a 313-amino-acid chain: Porphobilinogen deaminase (313 aa).

S-(dipyrrolylmethanemethyl)cysteine is present on Cys242.

The protein belongs to the HMBS family. As to quaternary structure, monomer. Dipyrromethane is required as a cofactor.

It carries out the reaction 4 porphobilinogen + H2O = hydroxymethylbilane + 4 NH4(+). The protein operates within porphyrin-containing compound metabolism; protoporphyrin-IX biosynthesis; coproporphyrinogen-III from 5-aminolevulinate: step 2/4. Tetrapolymerization of the monopyrrole PBG into the hydroxymethylbilane pre-uroporphyrinogen in several discrete steps. This is Porphobilinogen deaminase from Yersinia enterocolitica serotype O:8 / biotype 1B (strain NCTC 13174 / 8081).